The following is a 401-amino-acid chain: Acetate kinase (401 aa).

Asn-7 serves as a coordination point for Mg(2+). Lys-14 provides a ligand contact to ATP. Residue Arg-91 participates in substrate binding. Catalysis depends on Asp-148, which acts as the Proton donor/acceptor. ATP-binding positions include 208-212 (HLGNG), 283-285 (DFR), and 332-336 (GVGEN). Glu-385 contacts Mg(2+).

It belongs to the acetokinase family. Homodimer. The cofactor is Mg(2+). It depends on Mn(2+) as a cofactor.

It is found in the cytoplasm. It catalyses the reaction acetate + ATP = acetyl phosphate + ADP. It participates in metabolic intermediate biosynthesis; acetyl-CoA biosynthesis; acetyl-CoA from acetate: step 1/2. Functionally, catalyzes the formation of acetyl phosphate from acetate and ATP. Can also catalyze the reverse reaction. The sequence is that of Acetate kinase from Caldanaerobacter subterraneus subsp. tengcongensis (strain DSM 15242 / JCM 11007 / NBRC 100824 / MB4) (Thermoanaerobacter tengcongensis).